The primary structure comprises 273 residues: MKKKITRIAITGAMGRMGQVLIKEIQKNKNTVLTAALVKNNHPLIGQNIGEKIGIGKTSVSISSDINIEKNDFDVLIDFTKPSGTFYFLEQCYEFKKNMIIGTTGFSEKEIKTINSYAKKIALIKASNFSIGINLLYQLIQKTTKILGNTSDIDIIEYHHRNKIDIPSGTALSIGENISKVMNWELNKHSLYYTKGITKKIRETKKIGFSSIRSGNIIGKHTVLFSSSDEEIKITHSAFNRESFAKGAIEAAVWIHEKKHGLFNMNDILKDKF.

Residue 12 to 17 (GAMGRM) participates in NAD(+) binding. K39 lines the NADP(+) pocket. Residues 102–104 (GTT) and 126–129 (ASNF) contribute to the NAD(+) site. The active-site Proton donor/acceptor is H159. (S)-2,3,4,5-tetrahydrodipicolinate is bound at residue H160. K163 acts as the Proton donor in catalysis. Residue 169–170 (GT) coordinates (S)-2,3,4,5-tetrahydrodipicolinate.

This sequence belongs to the DapB family. Homotetramer.

The protein resides in the cytoplasm. The enzyme catalyses (S)-2,3,4,5-tetrahydrodipicolinate + NAD(+) + H2O = (2S,4S)-4-hydroxy-2,3,4,5-tetrahydrodipicolinate + NADH + H(+). It catalyses the reaction (S)-2,3,4,5-tetrahydrodipicolinate + NADP(+) + H2O = (2S,4S)-4-hydroxy-2,3,4,5-tetrahydrodipicolinate + NADPH + H(+). Its pathway is amino-acid biosynthesis; L-lysine biosynthesis via DAP pathway; (S)-tetrahydrodipicolinate from L-aspartate: step 4/4. Catalyzes the conversion of 4-hydroxy-tetrahydrodipicolinate (HTPA) to tetrahydrodipicolinate. The sequence is that of 4-hydroxy-tetrahydrodipicolinate reductase from Buchnera aphidicola subsp. Schizaphis graminum (strain Sg).